The sequence spans 175 residues: MRSIFLAVLGLMATSSLAAPRVAAQEGISAFDAMAKLKSVPLGYVHIADDGVARAYDENESVIDYVPLTNDQLKHLLQNLPEAWKKEEDHLHAVFDAVDGREVTDEKQLLEPPAELRNPMNHQAPQSKREANPLQQADYYCVGQPCTSGDACRFLGCRGCAQIDAALPGGGGVCF.

The N-terminal stretch at 1-18 (MRSIFLAVLGLMATSSLA) is a signal peptide. An N-linked (GlcNAc...) asparagine glycan is attached at Asn59.

This Emericella nidulans (strain FGSC A4 / ATCC 38163 / CBS 112.46 / NRRL 194 / M139) (Aspergillus nidulans) protein is Lactobacillus up-regulated protein (lbuA).